A 387-amino-acid polypeptide reads, in one-letter code: Large ribosomal subunit protein uL3 (387 aa).

Belongs to the universal ribosomal protein uL3 family.

It is found in the cytoplasm. This is Large ribosomal subunit protein uL3 (RPL3) from Kluyveromyces lactis (strain ATCC 8585 / CBS 2359 / DSM 70799 / NBRC 1267 / NRRL Y-1140 / WM37) (Yeast).